The sequence spans 124 residues: Aspartate 1-decarboxylase (124 aa).

Catalysis depends on Ser25, which acts as the Schiff-base intermediate with substrate; via pyruvic acid. At Ser25 the chain carries Pyruvic acid (Ser). Residue Thr57 participates in substrate binding. Residue Tyr58 is the Proton donor of the active site. Residue Gly73–Ala75 participates in substrate binding.

It belongs to the PanD family. In terms of assembly, heterooctamer of four alpha and four beta subunits. Pyruvate serves as cofactor. Is synthesized initially as an inactive proenzyme, which is activated by self-cleavage at a specific serine bond to produce a beta-subunit with a hydroxyl group at its C-terminus and an alpha-subunit with a pyruvoyl group at its N-terminus.

It localises to the cytoplasm. It carries out the reaction L-aspartate + H(+) = beta-alanine + CO2. Its pathway is cofactor biosynthesis; (R)-pantothenate biosynthesis; beta-alanine from L-aspartate: step 1/1. Its function is as follows. Catalyzes the pyruvoyl-dependent decarboxylation of aspartate to produce beta-alanine. The polypeptide is Aspartate 1-decarboxylase (Clostridium botulinum (strain Alaska E43 / Type E3)).